The following is a 650-amino-acid chain: Acetyl-coenzyme A synthetase (650 aa).

CoA contacts are provided by residues 191–194 (RGGR), Thr-311, and Asn-335. ATP contacts are provided by residues 387–389 (GEP), 411–416 (DTWWQT), Asp-501, and Arg-516. Ser-524 lines the CoA pocket. ATP is bound at residue Arg-527. Mg(2+)-binding residues include Val-538, His-540, and Ile-543. CoA is bound at residue Arg-585. The residue at position 610 (Lys-610) is an N6-acetyllysine.

It belongs to the ATP-dependent AMP-binding enzyme family. Mg(2+) serves as cofactor. Acetylated. Deacetylation by the SIR2-homolog deacetylase activates the enzyme.

It catalyses the reaction acetate + ATP + CoA = acetyl-CoA + AMP + diphosphate. Functionally, catalyzes the conversion of acetate into acetyl-CoA (AcCoA), an essential intermediate at the junction of anabolic and catabolic pathways. AcsA undergoes a two-step reaction. In the first half reaction, AcsA combines acetate with ATP to form acetyl-adenylate (AcAMP) intermediate. In the second half reaction, it can then transfer the acetyl group from AcAMP to the sulfhydryl group of CoA, forming the product AcCoA. The chain is Acetyl-coenzyme A synthetase from Vibrio vulnificus (strain YJ016).